A 303-amino-acid chain; its full sequence is Probable cell division protein WhiA (303 aa).

The H-T-H motif DNA-binding region spans 272–303 (SIQQLADSLSTPLTKSGVNHRLRKINKIADEL).

This sequence belongs to the WhiA family.

Involved in cell division and chromosome segregation. The chain is Probable cell division protein WhiA from Streptococcus pneumoniae serotype 4 (strain ATCC BAA-334 / TIGR4).